A 289-amino-acid polypeptide reads, in one-letter code: Phosphatidylinositol:ceramide inositolphosphotransferase 3 (289 aa).

Transmembrane regions (helical) follow at residues 33 to 53, 77 to 97, 115 to 135, 169 to 189, and 199 to 219; these read LVLA…GVHY, AFFS…WTFH, VFVY…ATQL, VIYG…LVFV, and RWIK…IIAS. The active site involves His181. Residues His222 and Asp226 contribute to the active site. The chain crosses the membrane as a helical span at residues 223–243; sequence YTVDIVVAWYTVNLVMFYVDS. A disordered region spans residues 249 to 289; the sequence is AERSSGPSPTPLLPLSTKDSKNKSKEDHQRLLNENNVADDH. Positions 266–279 are enriched in basic and acidic residues; the sequence is KDSKNKSKEDHQRL. Residues 280-289 show a composition bias toward polar residues; that stretch reads LNENNVADDH.

The protein belongs to the sphingomyelin synthase family. In terms of tissue distribution, mostly expressed in stems and flowers, and, to a lower extent, in leaves, roots and siliques.

The protein localises to the membrane. Its function is as follows. Catalyzes the transfer of the phosphorylinositol group from phosphatidylinositol (PI) to phytoceramide, an essential step in sphingolipid biosynthesis. In Arabidopsis thaliana (Mouse-ear cress), this protein is Phosphatidylinositol:ceramide inositolphosphotransferase 3 (IPCS3).